A 537-amino-acid polypeptide reads, in one-letter code: Carboxypeptidase Y homolog A (537 aa).

The first 17 residues, 1-17 (MRLSTSALVLGAASSAV), serve as a signal peptide directing secretion. Residues 18-124 (AFDQKVLGDL…RLDNYNLRAK (107 aa)) constitute a propeptide that is removed on maturation. Cystine bridges form between cysteine 178–cysteine 418, cysteine 312–cysteine 326, cysteine 336–cysteine 359, cysteine 343–cysteine 352, and cysteine 381–cysteine 388. Asparagine 209 is a glycosylation site (N-linked (GlcNAc...) asparagine). The active site involves serine 265. Aspartate 457 is an active-site residue. The N-linked (GlcNAc...) asparagine glycan is linked to asparagine 503. Residue histidine 514 is part of the active site.

This sequence belongs to the peptidase S10 family.

Its subcellular location is the vacuole. The catalysed reaction is Release of a C-terminal amino acid with broad specificity.. In terms of biological role, vacuolar carboxypeptidase involved in degradation of small peptides. Digests preferentially peptides containing an aliphatic or hydrophobic residue in P1' position, as well as methionine, leucine or phenylalanine in P1 position of ester substrate. The polypeptide is Carboxypeptidase Y homolog A (CPYA) (Fusarium vanettenii (strain ATCC MYA-4622 / CBS 123669 / FGSC 9596 / NRRL 45880 / 77-13-4) (Fusarium solani subsp. pisi)).